The primary structure comprises 488 residues: Glutamyl-tRNA(Gln) amidotransferase subunit A (488 aa).

Residues lysine 76 and serine 151 each act as charge relay system in the active site. Serine 175 (acyl-ester intermediate) is an active-site residue.

The protein belongs to the amidase family. GatA subfamily. In terms of assembly, heterotrimer of A, B and C subunits.

The catalysed reaction is L-glutamyl-tRNA(Gln) + L-glutamine + ATP + H2O = L-glutaminyl-tRNA(Gln) + L-glutamate + ADP + phosphate + H(+). Allows the formation of correctly charged Gln-tRNA(Gln) through the transamidation of misacylated Glu-tRNA(Gln) in organisms which lack glutaminyl-tRNA synthetase. The reaction takes place in the presence of glutamine and ATP through an activated gamma-phospho-Glu-tRNA(Gln). This Symbiobacterium thermophilum (strain DSM 24528 / JCM 14929 / IAM 14863 / T) protein is Glutamyl-tRNA(Gln) amidotransferase subunit A.